The following is a 92-amino-acid chain: YcgL domain-containing protein SO_2575 (92 aa).

The 85-residue stretch at 1–85 (MLCAVYKSSR…PQVNLLAEHR (85 aa)) folds into the YcgL domain.

The polypeptide is YcgL domain-containing protein SO_2575 (Shewanella oneidensis (strain ATCC 700550 / JCM 31522 / CIP 106686 / LMG 19005 / NCIMB 14063 / MR-1)).